The chain runs to 110 residues: Large ribosomal subunit protein uL22 (110 aa).

This sequence belongs to the universal ribosomal protein uL22 family. Part of the 50S ribosomal subunit.

This protein binds specifically to 23S rRNA; its binding is stimulated by other ribosomal proteins, e.g. L4, L17, and L20. It is important during the early stages of 50S assembly. It makes multiple contacts with different domains of the 23S rRNA in the assembled 50S subunit and ribosome. In terms of biological role, the globular domain of the protein is located near the polypeptide exit tunnel on the outside of the subunit, while an extended beta-hairpin is found that lines the wall of the exit tunnel in the center of the 70S ribosome. In Dichelobacter nodosus (strain VCS1703A), this protein is Large ribosomal subunit protein uL22.